Reading from the N-terminus, the 480-residue chain is Protein nucleotidyltransferase YdiU (480 aa).

ATP-binding residues include G86, G88, R89, K109, D121, G122, R172, and R179. The active-site Proton acceptor is D248. The Mg(2+) site is built by N249 and D258. An ATP-binding site is contributed by D258.

It belongs to the SELO family. The cofactor is Mg(2+). Mn(2+) serves as cofactor.

It carries out the reaction L-seryl-[protein] + ATP = 3-O-(5'-adenylyl)-L-seryl-[protein] + diphosphate. The enzyme catalyses L-threonyl-[protein] + ATP = 3-O-(5'-adenylyl)-L-threonyl-[protein] + diphosphate. It catalyses the reaction L-tyrosyl-[protein] + ATP = O-(5'-adenylyl)-L-tyrosyl-[protein] + diphosphate. The catalysed reaction is L-histidyl-[protein] + UTP = N(tele)-(5'-uridylyl)-L-histidyl-[protein] + diphosphate. It carries out the reaction L-seryl-[protein] + UTP = O-(5'-uridylyl)-L-seryl-[protein] + diphosphate. The enzyme catalyses L-tyrosyl-[protein] + UTP = O-(5'-uridylyl)-L-tyrosyl-[protein] + diphosphate. Its function is as follows. Nucleotidyltransferase involved in the post-translational modification of proteins. It can catalyze the addition of adenosine monophosphate (AMP) or uridine monophosphate (UMP) to a protein, resulting in modifications known as AMPylation and UMPylation. The protein is Protein nucleotidyltransferase YdiU of Salmonella typhi.